Reading from the N-terminus, the 106-residue chain is Evasin P1168 (106 aa).

The N-terminal stretch at 1-24 is a signal peptide; the sequence is MEVKISTFLQIAVLIVLGIHLIAA. 3 disulfide bridges follow: Cys-45–Cys-67, Cys-49–Cys-69, and Cys-60–Cys-80. Residues Asn-48, Asn-54, and Asn-64 are each glycosylated (N-linked (GlcNAc...) asparagine).

The protein localises to the secreted. Salivary chemokine-binding protein which binds to host chemokines CXCL1, CXCL2 and CXCL8. This chain is Evasin P1168, found in Ixodes ricinus (Common tick).